Consider the following 329-residue polypeptide: Serine/threonine-protein phosphatase PP1-alpha (329 aa).

Positions 64, 66, 92, and 124 each coordinate Mn(2+). Catalysis depends on His-125, which acts as the Proton donor. Residues His-173 and His-248 each coordinate Mn(2+). The segment at 309–329 (GMNSGRPAVGGGRPGTTAGKK) is disordered.

The protein belongs to the PPP phosphatase family. PP-1 subfamily. In terms of assembly, interacts with lab-1; the interaction is direct. Interacts with knl-1; the interaction is direct. Requires Mn(2+) as cofactor.

The enzyme catalyses O-phospho-L-seryl-[protein] + H2O = L-seryl-[protein] + phosphate. It carries out the reaction O-phospho-L-threonyl-[protein] + H2O = L-threonyl-[protein] + phosphate. Serine/threonine-protein phosphatase which antagonizes the function of air-2 in the regulation of chromosome cohesion. Dephosphorylates histone H3 at 'Ser-10'. Dephosphorylates translation initiation factor eIF2alpha. Involved in the activation of chloride channel clh-3 during cell swelling and meiotic maturation. The polypeptide is Serine/threonine-protein phosphatase PP1-alpha (gsp-1) (Caenorhabditis briggsae).